The following is a 516-amino-acid chain: 2-isopropylmalate synthase (516 aa).

A Pyruvate carboxyltransferase domain is found at 5–268; it reads LIIFDTTLRD…DLGIDTTQIV (264 aa). D14, H202, H204, and N239 together coordinate Mn(2+). Residues 395–516 form a regulatory domain region; that stretch reads KFVSLSQHSE…DKLNPQRADI (122 aa).

The protein belongs to the alpha-IPM synthase/homocitrate synthase family. LeuA type 1 subfamily. As to quaternary structure, homodimer. Mn(2+) serves as cofactor.

The protein resides in the cytoplasm. It catalyses the reaction 3-methyl-2-oxobutanoate + acetyl-CoA + H2O = (2S)-2-isopropylmalate + CoA + H(+). It participates in amino-acid biosynthesis; L-leucine biosynthesis; L-leucine from 3-methyl-2-oxobutanoate: step 1/4. In terms of biological role, catalyzes the condensation of the acetyl group of acetyl-CoA with 3-methyl-2-oxobutanoate (2-ketoisovalerate) to form 3-carboxy-3-hydroxy-4-methylpentanoate (2-isopropylmalate). This chain is 2-isopropylmalate synthase, found in Paraburkholderia phymatum (strain DSM 17167 / CIP 108236 / LMG 21445 / STM815) (Burkholderia phymatum).